A 307-amino-acid chain; its full sequence is Ubiquinol oxidase subunit 2 (307 aa).

The first 23 residues, 1–23 (MKNKLLARVARLGGLSSALLLAG), serve as a signal peptide directing secretion. A lipid anchor (N-palmitoyl cysteine) is attached at Cys-24. Cys-24 carries S-diacylglycerol cysteine lipidation. 2 helical membrane-spanning segments follow: residues 46–66 (STVA…LFAW) and 87–107 (IEVT…VITY).

It belongs to the cytochrome c oxidase subunit 2 family. As to quaternary structure, heterotetramer of the subunits 1, 2, 3 and 4.

It is found in the cell membrane. The protein is Ubiquinol oxidase subunit 2 (cyaB) of Acetobacter aceti.